The primary structure comprises 362 residues: Spermidine/putrescine import ATP-binding protein PotA (362 aa).

An ABC transporter domain is found at 6–236; it reads VELKHVGKRY…PVNHFVADFI (231 aa). 38–45 lines the ATP pocket; it reads GPSGSGKT.

Belongs to the ABC transporter superfamily. Spermidine/putrescine importer (TC 3.A.1.11.1) family. The complex is composed of two ATP-binding proteins (PotA), two transmembrane proteins (PotB and PotC) and a solute-binding protein (PotD).

It localises to the cell membrane. The enzyme catalyses ATP + H2O + polyamine-[polyamine-binding protein]Side 1 = ADP + phosphate + polyamineSide 2 + [polyamine-binding protein]Side 1.. Part of the ABC transporter complex PotABCD involved in spermidine/putrescine import. Responsible for energy coupling to the transport system. This is Spermidine/putrescine import ATP-binding protein PotA from Lacticaseibacillus paracasei (strain ATCC 334 / BCRC 17002 / CCUG 31169 / CIP 107868 / KCTC 3260 / NRRL B-441) (Lactobacillus paracasei).